A 209-amino-acid polypeptide reads, in one-letter code: MIIAIDGPAASGKGTLGKRLAAHYGFRHLDTGVIYRAVAKAMLDLGADLQDEARAVAVARALDPEKFGDPVLKTQAIGDAASVVSAIPAVREALINFQRQFAADPPGAVLDGRDIGTVICPDADVKIFVVADPKVRAHRRTLEARGRGEAADEALVLADILKRDERDKNRAAAPLKCAADAHVLDNSNLDIEGGVRAAIAIIEQARATR.

7–15 (GPAASGKGT) is an ATP binding site.

It belongs to the cytidylate kinase family. Type 1 subfamily.

The protein localises to the cytoplasm. The enzyme catalyses CMP + ATP = CDP + ADP. It catalyses the reaction dCMP + ATP = dCDP + ADP. The polypeptide is Cytidylate kinase (Afipia carboxidovorans (strain ATCC 49405 / DSM 1227 / KCTC 32145 / OM5) (Oligotropha carboxidovorans)).